Here is a 162-residue protein sequence, read N- to C-terminus: UPF0114 protein Sden_0436 (162 aa).

The next 3 helical transmembrane spans lie at 15–35 (IMAP…IKFF), 53–73 (LVLI…LIMV), and 136–156 (IMWY…MGYL).

Belongs to the UPF0114 family.

It localises to the cell membrane. This Shewanella denitrificans (strain OS217 / ATCC BAA-1090 / DSM 15013) protein is UPF0114 protein Sden_0436.